We begin with the raw amino-acid sequence, 244 residues long: 2,3-bisphosphoglycerate-dependent phosphoglycerate mutase (244 aa).

Substrate contacts are provided by residues 8–15 (RHGESNWN), 21–22 (TG), R60, 87–90 (ERHY), K98, 114–115 (RR), and 181–182 (GN). The active-site Tele-phosphohistidine intermediate is the H9. E87 functions as the Proton donor/acceptor in the catalytic mechanism.

It belongs to the phosphoglycerate mutase family. BPG-dependent PGAM subfamily.

It catalyses the reaction (2R)-2-phosphoglycerate = (2R)-3-phosphoglycerate. It participates in carbohydrate degradation; glycolysis; pyruvate from D-glyceraldehyde 3-phosphate: step 3/5. Its function is as follows. Catalyzes the interconversion of 2-phosphoglycerate and 3-phosphoglycerate. This Frankia alni (strain DSM 45986 / CECT 9034 / ACN14a) protein is 2,3-bisphosphoglycerate-dependent phosphoglycerate mutase.